A 348-amino-acid chain; its full sequence is Rhodopsin (348 aa).

Methionine 1 is modified (N-acetylmethionine). Residues 1-36 are Extracellular-facing; the sequence is MNGTEGPNFYVPFSNKTGVVRSPFEYPQYYLAEPWQ. Asparagine 2 and asparagine 15 each carry an N-linked (GlcNAc...) asparagine glycan. Residues 37 to 61 traverse the membrane as a helical segment; the sequence is FSMLAAYMFLLIVLGFPINFLTLYV. Over 62–73 the chain is Cytoplasmic; the sequence is TVQHKKLRTPLN. The chain crosses the membrane as a helical span at residues 74–96; it reads YILLNLAVADLFMVFGGFTTTLY. Over 97–110 the chain is Extracellular; the sequence is TSLHGYFVFGPTGC. Cysteine 110 and cysteine 187 form a disulfide bridge. A helical membrane pass occupies residues 111–133; the sequence is NVEGFFATLGGEIALWSLVVLAI. Positions 134–136 match the 'Ionic lock' involved in activated form stabilization motif; it reads ERY. The Cytoplasmic segment spans residues 134 to 152; it reads ERYVVVCKPMSNFRFGENH. The chain crosses the membrane as a helical span at residues 153–173; sequence AIMGVAFTWVMALACAAPPLA. Topologically, residues 174-202 are extracellular; sequence GWSRYIPEGMQCSCGIDYYTLKPEVNNES. Residue glutamate 201 coordinates Zn(2+). Residues 203–224 form a helical membrane-spanning segment; it reads FVIYMFVVHFTIPMIVIFFCYG. The Cytoplasmic segment spans residues 225 to 252; it reads QLVFTVKEAAAQQQESATTQKAEKEVTR. A helical transmembrane segment spans residues 253–274; it reads MVIIMVIAFLICWVPYASVAFY. Residues 275 to 286 are Extracellular-facing; it reads IFTHQGSNFGPI. Glutamine 279 contributes to the Zn(2+) binding site. Residues 287-308 form a helical membrane-spanning segment; sequence FMTLPAFFAKSASIYNPVIYIM. An N6-(retinylidene)lysine modification is found at lysine 296. Topologically, residues 309–348 are cytoplasmic; that stretch reads MNKQFRNCMLTTICCGKNPFAEEEGATTVSKTETSQVAPA. Residues cysteine 322 and cysteine 323 are each lipidated (S-palmitoyl cysteine). Residues 330–348 form an interaction with SAG region; the sequence is EEEGATTVSKTETSQVAPA. Phosphothreonine is present on residues threonine 335 and threonine 336. At serine 338 the chain carries Phosphoserine. Phosphothreonine occurs at positions 340 and 342. A Phosphoserine modification is found at serine 343.

The protein belongs to the G-protein coupled receptor 1 family. Opsin subfamily. As to quaternary structure, homodimer. May form a complex composed of RHO, GRK1 and RCVRN in a Ca(2+)-dependent manner; RCVRN prevents the interaction between GRK1 and RHO. Interacts with GRK1. Interacts (phosphorylated form) with SAG. Interacts with GNAT1. Interacts with GNAT3. SAG and G-proteins compete for a common binding site. Interacts with PRCD; the interaction promotes PRCD stability. Forms a complex with ASAP1 and ARF4. Forms a complex with ASAP1, RAB11A, Rabin8/RAB3IP, ARF4 and RAB11FIP3; the complex regulates Golgi-to-cilia rhodopsin/RHO transport in photoreceptors. Phosphorylated on some or all of the serine and threonine residues present in the C-terminal region. Post-translationally, contains one covalently linked retinal chromophore. Upon light absorption, the covalently bound 11-cis-retinal is converted to all-trans-retinal. After hydrolysis of the Schiff base and release of the covalently bound all-trans-retinal, active rhodopsin is regenerated by binding of a fresh molecule of 11-cis-retinal.

The protein localises to the membrane. The protein resides in the cell projection. Its subcellular location is the cilium. It is found in the photoreceptor outer segment. Functionally, photoreceptor required for image-forming vision at low light intensity. Required for photoreceptor cell viability after birth. Light-induced isomerization of 11-cis to all-trans retinal triggers a conformational change that activates signaling via G-proteins. Subsequent receptor phosphorylation mediates displacement of the bound G-protein alpha subunit by the arrestin SAG and terminates signaling. This is Rhodopsin (RHO) from Trichechus manatus (Caribbean manatee).